Consider the following 398-residue polypeptide: Succinyl-diaminopimelate desuccinylase (398 aa).

His-68 serves as a coordination point for Zn(2+). Asp-70 is an active-site residue. Asp-101 serves as a coordination point for Zn(2+). The Proton acceptor role is filled by Glu-135. Residues Glu-136, Glu-164, and His-349 each coordinate Zn(2+).

It belongs to the peptidase M20A family. DapE subfamily. As to quaternary structure, homodimer. Requires Zn(2+) as cofactor. The cofactor is Co(2+).

The enzyme catalyses N-succinyl-(2S,6S)-2,6-diaminopimelate + H2O = (2S,6S)-2,6-diaminopimelate + succinate. It participates in amino-acid biosynthesis; L-lysine biosynthesis via DAP pathway; LL-2,6-diaminopimelate from (S)-tetrahydrodipicolinate (succinylase route): step 3/3. In terms of biological role, catalyzes the hydrolysis of N-succinyl-L,L-diaminopimelic acid (SDAP), forming succinate and LL-2,6-diaminopimelate (DAP), an intermediate involved in the bacterial biosynthesis of lysine and meso-diaminopimelic acid, an essential component of bacterial cell walls. The sequence is that of Succinyl-diaminopimelate desuccinylase from Wolbachia pipientis subsp. Culex pipiens (strain wPip).